A 129-amino-acid chain; its full sequence is Lysozyme C-1 (129 aa).

The 129-residue stretch at Lys1–Leu129 folds into the C-type lysozyme domain. Disulfide bonds link Cys6–Cys127, Cys30–Cys115, Cys65–Cys81, and Cys77–Cys95. Active-site residues include Glu35 and Asp53.

This sequence belongs to the glycosyl hydrolase 22 family. Monomer.

It carries out the reaction Hydrolysis of (1-&gt;4)-beta-linkages between N-acetylmuramic acid and N-acetyl-D-glucosamine residues in a peptidoglycan and between N-acetyl-D-glucosamine residues in chitodextrins.. Its function is as follows. Lysozymes have primarily a bacteriolytic function; those in tissues and body fluids are associated with the monocyte-macrophage system and enhance the activity of immunoagents. This chain is Lysozyme C-1, found in Capra hircus (Goat).